A 71-amino-acid polypeptide reads, in one-letter code: UPF0346 protein SP70585_0986 (71 aa).

This sequence belongs to the UPF0346 family.

This Streptococcus pneumoniae (strain 70585) protein is UPF0346 protein SP70585_0986.